We begin with the raw amino-acid sequence, 249 residues long: MTALKTTETIPLYTIRGLPIHGFRNMGTFVDYLFAGERVETGTLVAINAEKVLTAEKEVALRTLLDRAEYKYADGISIVRSIRRKYPQADVTRIAGADLWEALMERAGKQETPVFLVGGKPDVLAQTEAKLRAQWDVNIVGSQDGYFTPEQRDALFERIRASGAQIVTVAMGSPRQEILMRDCRHHYPDALYMGIGGTYDVFTGHVKRAPLVWQNLGLEWLYRLLSQPSRIFRQLRLLKYVAYHYSGRL.

The protein belongs to the glycosyltransferase 26 family.

It carries out the reaction UDP-N-acetyl-alpha-D-mannosaminouronate + N-acetyl-alpha-D-glucosaminyl-di-trans,octa-cis-undecaprenyl diphosphate = beta-D-ManNAcA-(1-&gt;4)-alpha-D-GlcNAc-di-trans,octa-cis-undecaprenyl diphosphate + UDP + H(+). It functions in the pathway bacterial outer membrane biogenesis; enterobacterial common antigen biosynthesis. Functionally, catalyzes the synthesis of Und-PP-GlcNAc-ManNAcA (Lipid II), the second lipid-linked intermediate involved in enterobacterial common antigen (ECA) synthesis. In Pectobacterium atrosepticum (strain SCRI 1043 / ATCC BAA-672) (Erwinia carotovora subsp. atroseptica), this protein is UDP-N-acetyl-D-mannosaminuronic acid transferase.